We begin with the raw amino-acid sequence, 988 residues long: Voltage-gated delayed rectifier potassium channel KCNH5 (988 aa).

Topologically, residues 1–217 are cytoplasmic; it reads MPGGKRGLVA…LHYCAFKTTW (217 aa). One can recognise a PAS domain in the interval 14 to 86; sequence TFLENIVRRS…TIEKVRQTFD (73 aa). One can recognise a PAC domain in the interval 91–143; the sequence is NCFEVLLYKKNRTPVWFYMQIAPIRNEHEKVVLFLCTFKDITLFKQPIEDDST. The helical transmembrane segment at 218 to 238 threads the bilayer; that stretch reads DWVILILTFYTAIMVPYNVSF. Residues 239-243 lie on the Extracellular side of the membrane; that stretch reads KTKQN. Residues 244–264 form a helical membrane-spanning segment; the sequence is NIAWLVLDSVVDVIFLVDIVL. Residues 265 to 291 are Cytoplasmic-facing; it reads NFHTTFVGPGGEVISDPKLIRMNYLKT. The chain crosses the membrane as a helical span at residues 292–312; that stretch reads WFVIDLLSCLPYDIINAFENV. Topologically, residues 313–319 are extracellular; that stretch reads DEGISSL. Residues 320 to 340 traverse the membrane as a helical; Voltage-sensor segment; that stretch reads FSSLKVVRLLRLGRVARKLDH. Residues 341–346 lie on the Cytoplasmic side of the membrane; that stretch reads YLEYGA. The chain crosses the membrane as a helical span at residues 347-367; that stretch reads AVLVLLVCVFGLVAHWLACIW. Over 368–419 the chain is Extracellular; that stretch reads YSIGDYEVIDEVTNTIQIDSWLYQLALSIGTPYRYNTSAGIWEGGPSKDSLY. N-linked (GlcNAc...) asparagine glycosylation occurs at asparagine 403. Residues 420–440 constitute an intramembrane region (pore-forming); sequence VSSLYFTMTSLTTIGFGNIAP. A Selectivity filter motif is present at residues 432–437; it reads TIGFGN. The Extracellular segment spans residues 441–446; it reads TTDVEK. A helical membrane pass occupies residues 447–467; the sequence is MFSVAMMMVGSLLYATIFGNV. Over 468–988 the chain is Cytoplasmic; the sequence is TTIFQQMYAN…PESDKDEINF (521 aa). A nucleoside 3',5'-cyclic phosphate is bound at residue 550–667; that stretch reads AFRLASDGCL…NSFSRNLTLT (118 aa). The tract at residues 704 to 715 is calmodulin-binding; that stretch reads HPVRKLFQKFKQ. Positions 718–742 are disordered; the sequence is ELRNQGSAQSDPERSQLQVESRPLQ. Residues 721 to 742 show a composition bias toward polar residues; it reads NQGSAQSDPERSQLQVESRPLQ. A Glycyl lysine isopeptide (Lys-Gly) (interchain with G-Cter in ubiquitin) cross-link involves residue lysine 785. Disordered stretches follow at residues 839–897 and 946–965; these read LLSE…AKHP and SVPQTSSPKPQIPLQVPPQI. Positions 871-885 are enriched in basic and acidic residues; it reads SDLRLDKAGEARSPL. Serine 883 is modified (phosphoserine). The interval 909–948 is CAD (involved in subunit assembly); that stretch reads TLQEVKHELKEDIQLLSCRMTALEKQVAEILKLLSEKSVP.

Belongs to the potassium channel family. H (Eag) (TC 1.A.1.20) subfamily. Kv10.2/KCNH5 sub-subfamily. In terms of assembly, homotetramer. The potassium channel is probably composed of a homo- or heterotetrameric complex of pore-forming alpha subunits that can associate with modulating beta subunits. Heteromultimer with KCNH1/EAG. In terms of tissue distribution, detected in adult testis and in embryonic and adult brain, but not in other tissues. Highly expressed in specific brain areas, such as neocortex, olfactory bulb, primary olfactory cortex and brain stem. In cortex, expression is concentrated in a narrow band toward the middle lamella (layer IV). Moderately expressed in spinal cord, dorsal thalamic nuclei, medial hypothalamus, colliculus, lateral lemniscus, pontine nuclei and Islands of Calleja.

It localises to the membrane. It carries out the reaction K(+)(in) = K(+)(out). With respect to regulation, inhibited by low nanomolar concentrations of cytosolic calcium. Pore-forming (alpha) subunit of a voltage-gated delayed rectifier potassium channel that mediates outward-rectifying potassium currents which, on depolarization, reaches a steady-state level and do not inactivate. The kinetic is characterized by a slow activation time course and a small voltage dependence of the activation time constants, therefore, starts to open at more negative voltages. The activation kinetics depend on the prepulse potential and external divalent cation concentration. The time course of activation is biphasic with a fast and a slowly activating current component. With negative prepulses, the current activation is delayed and slowed down several fold, whereas more positive prepulses speed up activation, therefore the activation rate depends on holding potential. This is Voltage-gated delayed rectifier potassium channel KCNH5 from Rattus norvegicus (Rat).